Reading from the N-terminus, the 78-residue chain is Small acidic protein 2 (78 aa).

In terms of tissue distribution, expressed in siliques and anthers.

In terms of biological role, mediates responses to the synthetic auxin 2,4-dichlorophenoxyacetic acid (2,4-D). Not involved in the response to indole-3-acetic acid (IAA). May interact with RUB modification-related components and may regulate the culling-ring ubiquitin E3 ligase complex (CRL) activity. The sequence is that of Small acidic protein 2 (SMAP2) from Arabidopsis thaliana (Mouse-ear cress).